The primary structure comprises 366 residues: Chorismate synthase (366 aa).

Arg48 lines the NADP(+) pocket. Residues 125–127 (RSS), 241–242 (NA), Gly285, 300–304 (KPTSS), and Arg326 each bind FMN.

It belongs to the chorismate synthase family. As to quaternary structure, homotetramer. The cofactor is FMNH2.

The catalysed reaction is 5-O-(1-carboxyvinyl)-3-phosphoshikimate = chorismate + phosphate. It functions in the pathway metabolic intermediate biosynthesis; chorismate biosynthesis; chorismate from D-erythrose 4-phosphate and phosphoenolpyruvate: step 7/7. In terms of biological role, catalyzes the anti-1,4-elimination of the C-3 phosphate and the C-6 proR hydrogen from 5-enolpyruvylshikimate-3-phosphate (EPSP) to yield chorismate, which is the branch point compound that serves as the starting substrate for the three terminal pathways of aromatic amino acid biosynthesis. This reaction introduces a second double bond into the aromatic ring system. The protein is Chorismate synthase of Paracoccus denitrificans (strain Pd 1222).